A 946-amino-acid polypeptide reads, in one-letter code: Bifunctional glutamine synthetase adenylyltransferase/adenylyl-removing enzyme (946 aa).

Positions 1 to 440 (MKPLSSPLQQ…VFNELIGDDE (440 aa)) are adenylyl removase. The interval 449–946 (SEQWRELWQD…ASWQKWLVEE (498 aa)) is adenylyl transferase.

It belongs to the GlnE family. The cofactor is Mg(2+).

It catalyses the reaction [glutamine synthetase]-O(4)-(5'-adenylyl)-L-tyrosine + phosphate = [glutamine synthetase]-L-tyrosine + ADP. The enzyme catalyses [glutamine synthetase]-L-tyrosine + ATP = [glutamine synthetase]-O(4)-(5'-adenylyl)-L-tyrosine + diphosphate. Involved in the regulation of glutamine synthetase GlnA, a key enzyme in the process to assimilate ammonia. When cellular nitrogen levels are high, the C-terminal adenylyl transferase (AT) inactivates GlnA by covalent transfer of an adenylyl group from ATP to specific tyrosine residue of GlnA, thus reducing its activity. Conversely, when nitrogen levels are low, the N-terminal adenylyl removase (AR) activates GlnA by removing the adenylyl group by phosphorolysis, increasing its activity. The regulatory region of GlnE binds the signal transduction protein PII (GlnB) which indicates the nitrogen status of the cell. The chain is Bifunctional glutamine synthetase adenylyltransferase/adenylyl-removing enzyme from Escherichia coli O6:H1 (strain CFT073 / ATCC 700928 / UPEC).